The chain runs to 477 residues: Protoporphyrinogen oxidase (477 aa).

FAD-binding positions include 9–14, Trp42, 57–60, Val257, Ala449, and 454–456; these read GGGISG, GPRG, and VAV.

The protein belongs to the protoporphyrinogen/coproporphyrinogen oxidase family. Protoporphyrinogen oxidase subfamily. Monomer. Homodimer. FAD is required as a cofactor.

The protein resides in the mitochondrion inner membrane. It carries out the reaction protoporphyrinogen IX + 3 O2 = protoporphyrin IX + 3 H2O2. It participates in porphyrin-containing compound metabolism; protoporphyrin-IX biosynthesis; protoporphyrin-IX from protoporphyrinogen-IX: step 1/1. Catalyzes the 6-electron oxidation of protoporphyrinogen-IX to form protoporphyrin-IX. This Macaca fascicularis (Crab-eating macaque) protein is Protoporphyrinogen oxidase (PPOX).